The sequence spans 896 residues: Glutamate receptor 2.4 (896 aa).

Residues methionine 1–glycine 24 form the signal peptide. Topologically, residues glutamine 25 to threonine 565 are extracellular. Residues asparagine 26, asparagine 46, asparagine 53, asparagine 204, asparagine 267, asparagine 331, asparagine 341, and asparagine 527 are each glycosylated (N-linked (GlcNAc...) asparagine). Residues proline 566 to leucine 586 traverse the membrane as a helical segment. Topologically, residues glutamate 587–threonine 595 are cytoplasmic. A helical transmembrane segment spans residues glycine 596–alanine 616. Over proline 617–arginine 620 the chain is Cytoplasmic. The helical transmembrane segment at valine 621 to threonine 641 threads the bilayer. The Extracellular segment spans residues glutamine 642–serine 815. Residues phenylalanine 816–isoleucine 836 traverse the membrane as a helical segment. Residues cysteine 837–glycine 896 lie on the Cytoplasmic side of the membrane.

This sequence belongs to the glutamate-gated ion channel (TC 1.A.10.1) family. As to quaternary structure, may form heteromers. As to expression, expressed predominantly in roots.

It is found in the membrane. Functionally, glutamate-gated receptor that probably acts as a non-selective cation channel. May be involved in light-signal transduction and calcium homeostasis via the regulation of calcium influx into cells. The sequence is that of Glutamate receptor 2.4 (GLR2.4) from Arabidopsis thaliana (Mouse-ear cress).